The following is a 233-amino-acid chain: 2-C-methyl-D-erythritol 4-phosphate cytidylyltransferase (233 aa).

The protein belongs to the IspD/TarI cytidylyltransferase family. IspD subfamily.

It catalyses the reaction 2-C-methyl-D-erythritol 4-phosphate + CTP + H(+) = 4-CDP-2-C-methyl-D-erythritol + diphosphate. The protein operates within isoprenoid biosynthesis; isopentenyl diphosphate biosynthesis via DXP pathway; isopentenyl diphosphate from 1-deoxy-D-xylulose 5-phosphate: step 2/6. Functionally, catalyzes the formation of 4-diphosphocytidyl-2-C-methyl-D-erythritol from CTP and 2-C-methyl-D-erythritol 4-phosphate (MEP). The chain is 2-C-methyl-D-erythritol 4-phosphate cytidylyltransferase from Carboxydothermus hydrogenoformans (strain ATCC BAA-161 / DSM 6008 / Z-2901).